The primary structure comprises 267 residues: Glutamate racemase (267 aa).

Substrate is bound by residues 9 to 10 (DS) and 41 to 42 (YS). Cys73 functions as the Proton donor/acceptor in the catalytic mechanism. 74-75 (NT) contributes to the substrate binding site. The active-site Proton donor/acceptor is Cys184. 185–186 (TH) contributes to the substrate binding site.

It belongs to the aspartate/glutamate racemases family.

The enzyme catalyses L-glutamate = D-glutamate. The protein operates within cell wall biogenesis; peptidoglycan biosynthesis. Its function is as follows. Provides the (R)-glutamate required for cell wall biosynthesis. The protein is Glutamate racemase of Glaesserella parasuis serovar 5 (strain SH0165) (Haemophilus parasuis).